Consider the following 4481-residue polypeptide: Dynein axonemal heavy chain 17 (4481 aa).

A stem region spans residues 1 to 1792; that stretch reads MPDLRIDYLE…FANICDAQIK (1792 aa). A Kelch 1 repeat occupies 521-569; that stretch reads LLYMCGGLLERPLILVEVVPRYSVMLEMFNTELDNAKLMYDAQMAASAD. A coiled-coil region spans residues 759–826; the sequence is ENVMEYIQEM…GRVANLNKRY (68 aa). TPR repeat units follow at residues 1533 to 1566 and 1688 to 1722; these read VVEATNKPDLYNKLENLKMSLAVCEKALAEYLET and IWWTTEVGLAFARLEEGYENAIKDYNKKQISQLNA. AAA regions lie at residues 1793 to 2014, 2074 to 2295, 2401 to 2649, and 2747 to 2996; these read YSYE…VLVV, KIIK…IGFK, ELDP…IFQG, and SYNE…ERRY. ATP is bound by residues 1831 to 1838 and 2112 to 2119; these read GPAGTGKT and GNAGSGKS. Residues 2229-2275 form a Kelch 2 repeat; that stretch reads ISHLRTATPATVSRAGILYINPADLGWNPVVSSWIERRKVQSEKANL. Residues 2439–2446 and 2785–2792 each bind ATP; these read GNAGTGKS and GVGGSGKQ. The Kelch 3 repeat unit spans residues 2782-2834; sequence LLVGVGGSGKQSLSRLAAYISALDVFQITLKKGYAIPDLKMDLATQYIKSAVK. 2 coiled-coil regions span residues 3011-3071 and 3241-3293; these read YQNL…IQVV and DVAP…EKIK. The tract at residues 3011 to 3297 is stalk; it reads YQNLLAKKRM…TAEKIKCQQE (287 aa). 2 AAA regions span residues 3389–3616 and 3826–4059; these read LTDD…EIEE and VKNF…VLYN. The TPR 3 repeat unit spans residues 4138–4173; sequence PESPYLYGLHPNAEIGFLTVTSEKLFRTVLEMQPKE. Kelch repeat units follow at residues 4272–4321 and 4339–4385; these read NLGL…DLLQ and VWLA…DMTA.

The protein belongs to the dynein heavy chain family. In terms of assembly, consists of at least two heavy chains and a number of intermediate and light chains.

The protein resides in the cytoplasm. Its subcellular location is the cytoskeleton. It is found in the flagellum axoneme. In terms of biological role, force generating protein component of the outer dynein arms (ODAs) in the sperm flagellum. Produces force towards the minus ends of microtubules. Dynein has ATPase activity; the force-producing power stroke is thought to occur on release of ADP. Plays a major role in sperm motility, implicated in sperm flagellar assembly and beating. The polypeptide is Dynein axonemal heavy chain 17 (Mus musculus (Mouse)).